Here is a 277-residue protein sequence, read N- to C-terminus: Shikimate dehydrogenase (NADP(+)) (277 aa).

Shikimate is bound by residues 15–17 (SLS) and T62. Residue K66 is the Proton acceptor of the active site. Positions 87 and 102 each coordinate shikimate. NADP(+) is bound by residues 127-131 (GAGGA), 151-156 (NRTVDK), and I219. Y221 contacts shikimate. G242 serves as a coordination point for NADP(+).

It belongs to the shikimate dehydrogenase family. Homodimer.

The catalysed reaction is shikimate + NADP(+) = 3-dehydroshikimate + NADPH + H(+). The protein operates within metabolic intermediate biosynthesis; chorismate biosynthesis; chorismate from D-erythrose 4-phosphate and phosphoenolpyruvate: step 4/7. Functionally, involved in the biosynthesis of the chorismate, which leads to the biosynthesis of aromatic amino acids. Catalyzes the reversible NADPH linked reduction of 3-dehydroshikimate (DHSA) to yield shikimate (SA). The polypeptide is Shikimate dehydrogenase (NADP(+)) (Bacillus cereus (strain AH820)).